The sequence spans 215 residues: Large ribosomal subunit protein uL4 (215 aa).

Positions 46-76 (TAKSKNRAEVSGGGRKPWAQKGGGRARAGSI) are disordered. A compositionally biased stretch (gly residues) spans 56-71 (SGGGRKPWAQKGGGRA).

Belongs to the universal ribosomal protein uL4 family. As to quaternary structure, part of the 50S ribosomal subunit.

One of the primary rRNA binding proteins, this protein initially binds near the 5'-end of the 23S rRNA. It is important during the early stages of 50S assembly. It makes multiple contacts with different domains of the 23S rRNA in the assembled 50S subunit and ribosome. In terms of biological role, forms part of the polypeptide exit tunnel. This chain is Large ribosomal subunit protein uL4, found in Helicobacter acinonychis (strain Sheeba).